Consider the following 388-residue polypeptide: Galactokinase (388 aa).

Position 33–36 (33–36) interacts with substrate; the sequence is EHTD. ATP-binding positions include Ser67 and 124–130; that span reads GAGLSSS. Mg(2+)-binding residues include Ser130 and Glu162. Residue Asp174 is the Proton acceptor of the active site. Residue Tyr224 participates in substrate binding.

The protein belongs to the GHMP kinase family. GalK subfamily.

Its subcellular location is the cytoplasm. The enzyme catalyses alpha-D-galactose + ATP = alpha-D-galactose 1-phosphate + ADP + H(+). It functions in the pathway carbohydrate metabolism; galactose metabolism. Catalyzes the transfer of the gamma-phosphate of ATP to D-galactose to form alpha-D-galactose-1-phosphate (Gal-1-P). In Lacticaseibacillus paracasei (strain ATCC 334 / BCRC 17002 / CCUG 31169 / CIP 107868 / KCTC 3260 / NRRL B-441) (Lactobacillus paracasei), this protein is Galactokinase.